Here is a 238-residue protein sequence, read N- to C-terminus: Probable transcriptional regulatory protein YeeN (238 aa).

The protein belongs to the TACO1 family. YeeN subfamily.

The protein resides in the cytoplasm. This Salmonella typhimurium (strain LT2 / SGSC1412 / ATCC 700720) protein is Probable transcriptional regulatory protein YeeN.